Reading from the N-terminus, the 89-residue chain is Small ribosomal subunit protein uS15 (89 aa).

The protein belongs to the universal ribosomal protein uS15 family. Part of the 30S ribosomal subunit. Forms a bridge to the 50S subunit in the 70S ribosome, contacting the 23S rRNA.

In terms of biological role, one of the primary rRNA binding proteins, it binds directly to 16S rRNA where it helps nucleate assembly of the platform of the 30S subunit by binding and bridging several RNA helices of the 16S rRNA. Forms an intersubunit bridge (bridge B4) with the 23S rRNA of the 50S subunit in the ribosome. In Allorhizobium ampelinum (strain ATCC BAA-846 / DSM 112012 / S4) (Agrobacterium vitis (strain S4)), this protein is Small ribosomal subunit protein uS15.